The chain runs to 65 residues: Large ribosomal subunit protein uL29 (65 aa).

This sequence belongs to the universal ribosomal protein uL29 family.

The protein is Large ribosomal subunit protein uL29 of Lactobacillus delbrueckii subsp. bulgaricus (strain ATCC 11842 / DSM 20081 / BCRC 10696 / JCM 1002 / NBRC 13953 / NCIMB 11778 / NCTC 12712 / WDCM 00102 / Lb 14).